The chain runs to 239 residues: Ribosomal RNA small subunit methyltransferase G (239 aa).

S-adenosyl-L-methionine-binding positions include G77, F82, 128–129, and R147; that span reads AE.

This sequence belongs to the methyltransferase superfamily. RNA methyltransferase RsmG family.

It localises to the cytoplasm. Specifically methylates the N7 position of guanine in position 535 of 16S rRNA. The protein is Ribosomal RNA small subunit methyltransferase G of Bacillus mycoides (strain KBAB4) (Bacillus weihenstephanensis).